Consider the following 423-residue polypeptide: UPF0597 protein Emin_0811 (423 aa).

It belongs to the UPF0597 family.

In Elusimicrobium minutum (strain Pei191), this protein is UPF0597 protein Emin_0811.